The chain runs to 177 residues: Large ribosomal subunit protein uL6 (177 aa).

This sequence belongs to the universal ribosomal protein uL6 family. Part of the 50S ribosomal subunit.

This protein binds to the 23S rRNA, and is important in its secondary structure. It is located near the subunit interface in the base of the L7/L12 stalk, and near the tRNA binding site of the peptidyltransferase center. The protein is Large ribosomal subunit protein uL6 of Brucella melitensis biotype 1 (strain ATCC 23456 / CCUG 17765 / NCTC 10094 / 16M).